Here is a 381-residue protein sequence, read N- to C-terminus: E3 ubiquitin-protein ligase RNF13 (381 aa).

The signal sequence occupies residues 1-34 (MLLSIGMLMLSATQVYTILTVQLFAFLNLLPVEA). Over 35–182 (DILAYNFENA…VPEFSLPLEY (148 aa)) the chain is Lumenal. The PA domain maps to 65–160 (KGFLINSKPE…GESSANSLKD (96 aa)). Residue Asn88 is glycosylated (N-linked (GlcNAc...) asparagine). Residues 183–203 (YLIPFLIIVGICLILIVIFMI) traverse the membrane as a helical segment. Residues 204–381 (TKFVQDRHRA…ERDYNIANTV (178 aa)) lie on the Cytoplasmic side of the membrane. The RING-type; atypical zinc finger occupies 240 to 282 (CAICLDEYEDGDKLRILPCSHAYHCKCVDPWLTKTKKTCPVCK). The disordered stretch occupies residues 285-381 (VVPSQGDSDS…ERDYNIANTV (97 aa)). Acidic residues-rich tracts occupy residues 292-304 (SDSD…EENE) and 339-357 (SDYE…AENE).

In terms of assembly, interacts with ERN1. In terms of processing, autoubiquitinated. In terms of tissue distribution, widely expressed (at protein level). In normal pancreas, expressed in islets, but not in ducts, nor in acini (at protein level).

It is found in the endoplasmic reticulum membrane. The protein localises to the late endosome membrane. Its subcellular location is the lysosome membrane. The protein resides in the nucleus inner membrane. The enzyme catalyses S-ubiquitinyl-[E2 ubiquitin-conjugating enzyme]-L-cysteine + [acceptor protein]-L-lysine = [E2 ubiquitin-conjugating enzyme]-L-cysteine + N(6)-ubiquitinyl-[acceptor protein]-L-lysine.. It functions in the pathway protein modification; protein ubiquitination. Its function is as follows. E3 ubiquitin-protein ligase that regulates cell proliferation. Involved in apoptosis regulation. Mediates ER stress-induced activation of JNK signaling pathway and apoptosis by promoting ERN1 activation and splicing of XBP1 mRNA. Also involved in protein trafficking and localization. The chain is E3 ubiquitin-protein ligase RNF13 from Homo sapiens (Human).